Reading from the N-terminus, the 181-residue chain is Large ribosomal subunit protein uL6 (181 aa).

Belongs to the universal ribosomal protein uL6 family. Part of the 50S ribosomal subunit.

In terms of biological role, this protein binds to the 23S rRNA, and is important in its secondary structure. It is located near the subunit interface in the base of the L7/L12 stalk, and near the tRNA binding site of the peptidyltransferase center. The chain is Large ribosomal subunit protein uL6 from Coprothermobacter proteolyticus (strain ATCC 35245 / DSM 5265 / OCM 4 / BT).